A 315-amino-acid chain; its full sequence is Putative steroid dehydrogenase 3 (315 aa).

47-76 lines the NADP(+) pocket; sequence ASWAVITGGTDGIGKSFSFELAKRGFNIYI. Residue Tyr202 is part of the active site.

The protein belongs to the short-chain dehydrogenases/reductases (SDR) family. 17-beta-HSD 3 subfamily.

The chain is Putative steroid dehydrogenase 3 (stdh-3) from Caenorhabditis elegans.